Reading from the N-terminus, the 1175-residue chain is Atrophin-1 (1175 aa).

3 disordered regions span residues 1–595, 608–752, and 770–847; these read MKTR…VTTS, SSPA…ARFN, and VPLE…HRPP. The Nuclear localization signal motif lies at 16 to 32; sequence RKKEAPGPREELRSRGR. Over residues 17–29 the composition is skewed to basic and acidic residues; that stretch reads KKEAPGPREELRS. S34 is subject to Phosphoserine. Basic and acidic residues predominate over residues 45–63; the sequence is GKAEKSRQTAKKARIEEPS. S77, S79, S101, S103, and S107 each carry phosphoserine. Over residues 108-128 the composition is skewed to basic and acidic residues; it reads LDGRSINDDGSSDPRDIDQDN. Residues 129–152 are compositionally biased toward polar residues; the sequence is RSTSPSIYSPGSVENDSDSSSGLS. Pro residues-rich tracts occupy residues 158–174 and 208–217; these read PYHPPPLFPPSPPPPDS and GPPPGAPPTH. Low complexity-rich tracts occupy residues 240-253 and 262-273; these read GAAASSVGAPSGGK and IPISSSGASGAP. Residues 345 to 374 show a composition bias toward pro residues; that stretch reads PPGPEKGPTLAPSPHPLPPASSSAPGPPMR. Residues 378–396 show a composition bias toward low complexity; sequence SSSSSSAAASSSSSSSSAS. Over residues 416–437 the composition is skewed to polar residues; that stretch reads SMSVSNQPPKYTQPSLPSQAVW. Over residues 476 to 491 the composition is skewed to basic residues; the sequence is THHHHQQQPQQQHHHG. The involved in binding BAIAP2 stretch occupies residues 503–553; the sequence is HPLESSNSHHAHPYNMSPSLGSLRPYPPGPAHLPPPHGQVSYNQAGPNGPP. The segment covering 527–539 has biased composition (pro residues); that stretch reads PYPPGPAHLPPPH. The span at 547-584 shows a compositional bias: low complexity; sequence AGPNGPPVSSSNSSGSSSQASYSCSHPSSSQGPQGASY. S617 is modified (phosphoserine). Residue K626 is modified to N6-acetyllysine. T638 is modified (phosphothreonine). Residue S646 is modified to Phosphoserine. A Phosphothreonine modification is found at T654. 2 stretches are compositionally biased toward pro residues: residues 693–703 and 722–737; these read LPPPPAAPTTG and PESPVPPARSPSPPPK. At S724 the chain carries Phosphoserine; by MAPK8. Residues S731 and S733 each carry the phosphoserine modification. Basic and acidic residues predominate over residues 780 to 824; the sequence is KRADLVEKVRREAEQRAREEKEREREREREKEREREKERELERSV. Residues 864–879 form a required for interaction with FAT1 region; the sequence is DTPALRTLSEYARPHV. Position 881 is a phosphoserine (S881). The disordered stretch occupies residues 913–932; it reads PAAREREREARERDLRDRLK. Over residues 914 to 932 the composition is skewed to basic and acidic residues; sequence AAREREREARERDLRDRLK. The short motif at 1018 to 1026 is the Nuclear export signal element; the sequence is ALGNDPLAR. Asymmetric dimethylarginine is present on R1100. K1168 participates in a covalent cross-link: Glycyl lysine isopeptide (Lys-Gly) (interchain with G-Cter in SUMO2).

As to quaternary structure, interacts with BAIAP2, WWP1, WWP2, WWP3 and RERE. Interacts (via its N-terminus) with MTG8; the interaction enhances transcriptional repression of MTG8. Interacts with PQBP1. Interacts with NR2E1; the interaction represses the transcriptional activity of NR2E1. Interacts with FAT1 (via a C-terminal domain). Post-translationally, phosphorylated in vitro by MAPK8/JNK1 on Ser-724. As to expression, widely expressed. Most abundant in the brain.

The protein localises to the cytoplasm. Its subcellular location is the perinuclear region. It localises to the cell junction. The protein resides in the nucleus. Functionally, transcriptional corepressor. Corepressor of MTG8 transcriptional repression. Has some intrinsic repression activity which is independent of the number of the poly-Q repeats. Recruits NR2E1 to repress transcription. Promotes vascular smooth cell (VSMC) migration and orientation. The protein is Atrophin-1 (Atn1) of Mus musculus (Mouse).